Reading from the N-terminus, the 403-residue chain is Probable protein phosphatase 2C 8 (403 aa).

The interval 42–80 (LGRTASAVAEDDAAKRVRPASDSSSDSSESAKVAPEPTA) is disordered. Residues 62–71 (SDSSSDSSES) show a composition bias toward low complexity. One can recognise a PPM-type phosphatase domain in the interval 90-388 (SHGAVSVIGR…DNISVVVVEL (299 aa)). Aspartate 144, glycine 145, aspartate 325, and aspartate 379 together coordinate Mn(2+).

Belongs to the PP2C family. Requires Mg(2+) as cofactor. Mn(2+) serves as cofactor.

The catalysed reaction is O-phospho-L-seryl-[protein] + H2O = L-seryl-[protein] + phosphate. It catalyses the reaction O-phospho-L-threonyl-[protein] + H2O = L-threonyl-[protein] + phosphate. The polypeptide is Probable protein phosphatase 2C 8 (Oryza sativa subsp. japonica (Rice)).